The sequence spans 313 residues: Aspartate carbamoyltransferase catalytic subunit (313 aa).

Residues Arg58 and Thr59 each coordinate carbamoyl phosphate. Position 86 (Lys86) interacts with L-aspartate. 3 residues coordinate carbamoyl phosphate: Arg108, His136, and Gln139. Arg169 and Arg223 together coordinate L-aspartate. Residues Gly265 and Pro266 each contribute to the carbamoyl phosphate site.

This sequence belongs to the aspartate/ornithine carbamoyltransferase superfamily. ATCase family. As to quaternary structure, heterododecamer (2C3:3R2) of six catalytic PyrB chains organized as two trimers (C3), and six regulatory PyrI chains organized as three dimers (R2).

It carries out the reaction carbamoyl phosphate + L-aspartate = N-carbamoyl-L-aspartate + phosphate + H(+). It functions in the pathway pyrimidine metabolism; UMP biosynthesis via de novo pathway; (S)-dihydroorotate from bicarbonate: step 2/3. Functionally, catalyzes the condensation of carbamoyl phosphate and aspartate to form carbamoyl aspartate and inorganic phosphate, the committed step in the de novo pyrimidine nucleotide biosynthesis pathway. The protein is Aspartate carbamoyltransferase catalytic subunit of Anaeromyxobacter dehalogenans (strain 2CP-1 / ATCC BAA-258).